Reading from the N-terminus, the 451-residue chain is Tubulin alpha-1B chain (451 aa).

The short motif at Met1–Cys4 is the MREC motif element. Residues Gly10, Gln11, Ala12, and Gln15 each coordinate GTP. At Lys40 the chain carries N6,N6,N6-trimethyllysine; alternate. The residue at position 40 (Lys40) is an N6-acetyllysine; alternate. Ser48 is modified (phosphoserine). GTP-binding residues include Glu71, Ala99, Ser140, Gly143, Gly144, Thr145, Gly146, Thr179, Glu183, Asn206, Tyr224, and Asn228. Glu71 lines the Mg(2+) pocket. Ser232 carries the post-translational modification Phosphoserine. GTP is bound at residue Leu252. Residue Glu254 is part of the active site. At Tyr282 the chain carries 3'-nitrotyrosine. Lys326 participates in a covalent cross-link: Glycyl lysine isopeptide (Lys-Gly) (interchain with G-Cter in ubiquitin). The residue at position 339 (Arg339) is an Omega-N-methylarginine. Lys370 participates in a covalent cross-link: Glycyl lysine isopeptide (Lys-Gly) (interchain with G-Cter in ubiquitin). Residue Ser439 is modified to Phosphoserine. Residues Glu443 and Glu445 each carry the 5-glutamyl polyglutamate modification. At Tyr451 the chain carries 3'-nitrotyrosine.

It belongs to the tubulin family. Heterodimer of alpha- and beta-tubulin. A typical microtubule is a hollow water-filled tube with an outer diameter of 25 nm and an inner diameter of 15 nM. Alpha-beta heterodimers associate head-to-tail to form protofilaments running lengthwise along the microtubule wall with the beta-tubulin subunit facing the microtubule plus end conferring a structural polarity. Microtubules usually have 13 protofilaments but different protofilament numbers can be found in some organisms and specialized cells. Interacts with gamma-tubulin; the interaction allows microtubules to nucleate from the gamma-tubulin ring complex (gTuRC). Nascent microtubule interacts (via alpha-tubulin MREC motif) with TTC5/STRAP; this interaction may result in tubulin mRNA-targeted degradation. Component of sperm flagellar doublet microtubules. Requires Mg(2+) as cofactor. In terms of processing, some glutamate residues at the C-terminus are polyglycylated, resulting in polyglycine chains on the gamma-carboxyl group. Glycylation is mainly limited to tubulin incorporated into axonemes (cilia and flagella) whereas glutamylation is prevalent in neuronal cells, centrioles, axonemes, and the mitotic spindle. Both modifications can coexist on the same protein on adjacent residues, and lowering polyglycylation levels increases polyglutamylation, and reciprocally. Cilia and flagella glycylation is required for their stability and maintenance. Flagella glycylation controls sperm motility. Some glutamate residues at the C-terminus are polyglutamylated, resulting in polyglutamate chains on the gamma-carboxyl group. Polyglutamylation plays a key role in microtubule severing by spastin (SPAST). SPAST preferentially recognizes and acts on microtubules decorated with short polyglutamate tails: severing activity by SPAST increases as the number of glutamates per tubulin rises from one to eight, but decreases beyond this glutamylation threshold. Glutamylation is also involved in cilia motility. Post-translationally, acetylation of alpha chains at Lys-40 is located inside the microtubule lumen. This modification has been correlated with increased microtubule stability, intracellular transport and ciliary assembly. In terms of processing, methylation of alpha chains at Lys-40 is found in mitotic microtubules and is required for normal mitosis and cytokinesis contributing to genomic stability. Nitration of Tyr-451 is irreversible and interferes with normal dynein intracellular distribution. Post-translationally, undergoes a tyrosination/detyrosination cycle, the cyclic removal and re-addition of a C-terminal tyrosine residue by the enzymes tubulin tyrosine carboxypeptidase (MATCAP1, VASH1 or VASH2) and tubulin tyrosine ligase (TTL), respectively. In terms of processing, tyrosination promotes microtubule interaction with CAP-Gly domain-containing proteins such as CLIP1, CLIP2 and DCTN1. Tyrosination regulates the initiation of dynein-dynactin motility via interaction with DCTN1, which brings the dynein-dynactin complex into contact with microtubules. In neurons, tyrosinated tubulins mediate the initiation of retrograde vesicle transport. Detyrosination is involved in metaphase plate congression by guiding chromosomes during mitosis: detyrosination promotes interaction with CENPE, promoting pole-proximal transport of chromosomes toward the equator. Detyrosination increases microtubules-dependent mechanotransduction in dystrophic cardiac and skeletal muscle. In cardiomyocytes, detyrosinated microtubules are required to resist to contractile compression during contraction: detyrosination promotes association with desmin (DES) at force-generating sarcomeres, leading to buckled microtubules and mechanical resistance to contraction.

The protein resides in the cytoplasm. It is found in the cytoskeleton. The enzyme catalyses GTP + H2O = GDP + phosphate + H(+). In terms of biological role, tubulin is the major constituent of microtubules, protein filaments consisting of alpha- and beta-tubulin heterodimers. Microtubules grow by the addition of GTP-tubulin dimers to the microtubule end, where a stabilizing cap forms. Below the cap, tubulin dimers are in GDP-bound state, owing to GTPase activity of alpha-tubulin. This Pan troglodytes (Chimpanzee) protein is Tubulin alpha-1B chain (TUBA1B).